The chain runs to 271 residues: Mediator of RNA polymerase II transcription subunit 18 (271 aa).

Residues 89 to 119 (FGGNPSSSGDPDVSMSGLEEKPSSSSSSYSY) are disordered.

Belongs to the Mediator complex subunit 18 family. As to quaternary structure, component of the Mediator complex.

It is found in the nucleus. Functionally, component of the Mediator complex, a coactivator involved in the regulated transcription of nearly all RNA polymerase II-dependent genes. Mediator functions as a bridge to convey information from gene-specific regulatory proteins to the basal RNA polymerase II transcription machinery. Mediator is recruited to promoters by direct interactions with regulatory proteins and serves as a scaffold for the assembly of a functional preinitiation complex with RNA polymerase II and the general transcription factors. In Aspergillus niger (strain ATCC MYA-4892 / CBS 513.88 / FGSC A1513), this protein is Mediator of RNA polymerase II transcription subunit 18 (srb5).